Consider the following 331-residue polypeptide: Glyceraldehyde-3-phosphate dehydrogenase (331 aa).

NAD(+) contacts are provided by residues 12-13 (RI), D34, R78, and T120. D-glyceraldehyde 3-phosphate-binding positions include 149–151 (SCT), T180, 209–210 (TG), and R232. C150 serves as the catalytic Nucleophile. N314 contacts NAD(+).

This sequence belongs to the glyceraldehyde-3-phosphate dehydrogenase family. As to quaternary structure, homotetramer.

It is found in the cytoplasm. The catalysed reaction is D-glyceraldehyde 3-phosphate + phosphate + NAD(+) = (2R)-3-phospho-glyceroyl phosphate + NADH + H(+). It participates in carbohydrate degradation; glycolysis; pyruvate from D-glyceraldehyde 3-phosphate: step 1/5. Catalyzes the oxidative phosphorylation of glyceraldehyde 3-phosphate (G3P) to 1,3-bisphosphoglycerate (BPG) using the cofactor NAD. The first reaction step involves the formation of a hemiacetal intermediate between G3P and a cysteine residue, and this hemiacetal intermediate is then oxidized to a thioester, with concomitant reduction of NAD to NADH. The reduced NADH is then exchanged with the second NAD, and the thioester is attacked by a nucleophilic inorganic phosphate to produce BPG. The sequence is that of Glyceraldehyde-3-phosphate dehydrogenase (gapA) from Salmonella typhi.